The sequence spans 301 residues: MYVVAALYHFTRFADPDALRAPLRSIAEAGNVRGSLLLAPEGINGTIAGPRAGIDAVLAHIKGLPGCAGLEWKESTATAAPFGKLKVRLKTEIVSMGAPGLDPADVGTHVAPAEWNALISAPDVAVIDTRNAYEVEIGTFEGAVDPATESFRDFPAWWQANKHRFANQRIAMFCTGGIRCEKSTAYLKEQGVEEVFHLKGGILKYLEDVPEDQSLWQGGCFVFDERVAVGHGLAELPFDLCRACRHPISCEEKADLAFEEGVSCPRCMDVHSDADRARFRERQKQIALAKARGEAHLGAGD.

A Rhodanese domain is found at 120 to 214 (SAPDVAVIDT…YLEDVPEDQS (95 aa)). Cys174 (cysteine persulfide intermediate) is an active-site residue.

This sequence belongs to the TrhO family.

It catalyses the reaction uridine(34) in tRNA + AH2 + O2 = 5-hydroxyuridine(34) in tRNA + A + H2O. Its function is as follows. Catalyzes oxygen-dependent 5-hydroxyuridine (ho5U) modification at position 34 in tRNAs. The sequence is that of tRNA uridine(34) hydroxylase from Jannaschia sp. (strain CCS1).